We begin with the raw amino-acid sequence, 115 residues long: Skin calcitonin gene-related peptide (115 aa).

The N-terminal stretch at Met1 to Ala25 is a signal peptide. Residues Ala26–Arg69 constitute a propeptide, removed in mature form by a carboxypeptidase. A disulfide bridge links Cys71 with Cys76. Phe106 carries the post-translational modification Phenylalanine amide. The propeptide at Gly107 to Val115 is removed in mature form by an endoprotease.

As to expression, skin, intestine and brain.

It is found in the secreted. In terms of biological role, CGRP induces vasodilation. It dilates a variety of vessels including the coronary, cerebral and systemic vasculature. Its abundance in the CNS also points toward a neurotransmitter or neuromodulator role. This Phyllomedusa bicolor (Two-colored leaf frog) protein is Skin calcitonin gene-related peptide.